A 543-amino-acid polypeptide reads, in one-letter code: Transmembrane protease serine 13 (543 aa).

Disordered regions lie at residues 1–96 and 109–129; these read MDRG…TRVY and RASPARSAPATRATRESPGLS. The Cytoplasmic segment spans residues 1 to 143; the sequence is MDRGSHRNSS…SWQETQRQLP (143 aa). A run of 2 repeats spans residues 14–17 and 18–22. The tract at residues 14–49 is 4 X 4 AA repeats of T-P-P-Q; it reads TPPQASPARTSPARAPPQASPARTPPQASPARTPPQ. An 8 X 5 AA repeats of A-S-P-A-R region spans residues 18–69; the sequence is ASPARTSPARAPPQASPARTPPQASPARTPPQASPARAPPPQASPARASPAR. The stretch at 23-27 is one 2-2; approximate repeat; that stretch reads TSPAR. Over residues 27-60 the composition is skewed to pro residues; that stretch reads RAPPQASPARTPPQASPARTPPQASPARAPPPQA. One copy of the 1-2; approximate repeat lies at 28–31; that stretch reads APPQ. A run of 5 repeats spans residues 32 to 36, 37 to 40, 41 to 45, 46 to 49, and 50 to 54. The stretch at 55–59 is one 2-6; approximate repeat; sequence APPPQ. 2 consecutive repeat copies span residues 60–64 and 65–69. 2 stretches are compositionally biased toward low complexity: residues 61–94 and 109–120; these read SPARASPARAPPSRSSSGRSSSARSASTTSSPTR and RASPARSAPATR. Residues 144–164 form a helical; Signal-anchor for type II membrane protein membrane-spanning segment; it reads LIGCVILLISLVISLILLFYF. The Extracellular portion of the chain corresponds to 165 to 543; sequence WRGHTGIKYK…MESEVRFRKS (379 aa). One can recognise an LDL-receptor class A domain in the interval 180–202; it reads CPIHAVRCDGVVDCKMKSDELGC. One can recognise an SRCR domain in the interval 199 to 301; the sequence is ELGCVRFDWD…HCGLRAMTGR (103 aa). Intrachain disulfides connect Cys-226/Cys-290, Cys-239/Cys-293, and Cys-327/Cys-343. 2 N-linked (GlcNAc...) asparagine glycosylation sites follow: Asn-231 and Asn-268. Residues 302 to 535 enclose the Peptidase S1 domain; it reads IVGGALTSES…VLPWIYRKME (234 aa). The active-site Charge relay system is the His-342. N-linked (GlcNAc...) asparagine glycosylation occurs at Asn-381. Residue Asp-390 is the Charge relay system of the active site. Asn-421 carries N-linked (GlcNAc...) asparagine glycosylation. 3 disulfides stabilise this stretch: Cys-424-Cys-493, Cys-456-Cys-472, and Cys-483-Cys-511. The active-site Charge relay system is Ser-487.

This sequence belongs to the peptidase S1 family. In terms of assembly, interacts with SPINT1/HAI-1; the interaction promotes the phosphorylation and cell membrane localization of TMPRSS13. Interacts with SPINT2/HAI-2; the interaction promotes the phosphorylation and cell membrane localization of TMPRSS13. In terms of processing, the inactive zymogen is post-translationally modified and then trafficked to the cell surface, whereby it undergoes autocatalytic cleavage resulting in an activated form that is released extracellularly. Phosphorylation is required for localization at the cell surface. Phosphorylation increases following inhibition of protease activity by SPINT2/HAI-2. In terms of tissue distribution, expressed in the suprabasal squamous epithelium of the epidermis, hair follicles, oral epithelium, cornea, upper digestive tract, transitional epithelium of the bladder, prostate, heart, intestine, kidney and thymus.

Its subcellular location is the cell membrane. The protein localises to the secreted. It is found in the cytoplasm. Its activity is regulated as follows. Cleavage of HGF is inhibited by SPINT1/HAI-1 via the BPTI/Kunitz inhibitor 1 domain. Serine protease. Cleaves the proform of PRSS8/prostasin to form the active protein. Cleaves the proform of HGF to form the active protein which promotes MAPK signaling. Promotes the formation of the stratum corneum and subsequently the epidermal barrier in embryos. The polypeptide is Transmembrane protease serine 13 (Tmprss13) (Mus musculus (Mouse)).